Consider the following 205-residue polypeptide: Thiamine-phosphate synthase (205 aa).

4-amino-2-methyl-5-(diphosphooxymethyl)pyrimidine contacts are provided by residues 37-41 (QVREK) and N69. Mg(2+) is bound by residues D70 and D89. S108 lines the 4-amino-2-methyl-5-(diphosphooxymethyl)pyrimidine pocket. 134–136 (TGS) is a binding site for 2-[(2R,5Z)-2-carboxy-4-methylthiazol-5(2H)-ylidene]ethyl phosphate. Residue K137 participates in 4-amino-2-methyl-5-(diphosphooxymethyl)pyrimidine binding. Residues G165 and 185-186 (IS) each bind 2-[(2R,5Z)-2-carboxy-4-methylthiazol-5(2H)-ylidene]ethyl phosphate.

This sequence belongs to the thiamine-phosphate synthase family. It depends on Mg(2+) as a cofactor.

The enzyme catalyses 2-[(2R,5Z)-2-carboxy-4-methylthiazol-5(2H)-ylidene]ethyl phosphate + 4-amino-2-methyl-5-(diphosphooxymethyl)pyrimidine + 2 H(+) = thiamine phosphate + CO2 + diphosphate. It catalyses the reaction 2-(2-carboxy-4-methylthiazol-5-yl)ethyl phosphate + 4-amino-2-methyl-5-(diphosphooxymethyl)pyrimidine + 2 H(+) = thiamine phosphate + CO2 + diphosphate. It carries out the reaction 4-methyl-5-(2-phosphooxyethyl)-thiazole + 4-amino-2-methyl-5-(diphosphooxymethyl)pyrimidine + H(+) = thiamine phosphate + diphosphate. Its pathway is cofactor biosynthesis; thiamine diphosphate biosynthesis; thiamine phosphate from 4-amino-2-methyl-5-diphosphomethylpyrimidine and 4-methyl-5-(2-phosphoethyl)-thiazole: step 1/1. Its function is as follows. Condenses 4-methyl-5-(beta-hydroxyethyl)thiazole monophosphate (THZ-P) and 2-methyl-4-amino-5-hydroxymethyl pyrimidine pyrophosphate (HMP-PP) to form thiamine monophosphate (TMP). The chain is Thiamine-phosphate synthase from Clostridium botulinum (strain ATCC 19397 / Type A).